Consider the following 82-residue polypeptide: Small ribosomal subunit protein bS16 (82 aa).

This sequence belongs to the bacterial ribosomal protein bS16 family.

The polypeptide is Small ribosomal subunit protein bS16 (Vibrio vulnificus (strain CMCP6)).